The following is a 297-amino-acid chain: MTVPASTAPQVPPQQDPQVPHPQEPREEPHEEPPSPPAAPRPQSRGADTRALTQVLFGQLKGLQPGTREHERVRGALIEANLPLVRYAAARFRSRNEPMEDVVQVGTIGLINAIDRFDPERGVQFPTFAMPTVVGEIKRYFRDNVRTVHVPRRLHELWVQVNAATEDLTTLHGRTPTTPEIAERLRISEDEVLSCIEAGRSYHATSLEAAQEGDGMPGLLDRLGYEDPELAGVEHRDLVRHLLVQLPEREQRILLLRYYNNLTQSQISAELGVSQMHVSRLLARSFARLRSANRIEA.

Residues 1 to 46 are disordered; the sequence is MTVPASTAPQVPPQQDPQVPHPQEPREEPHEEPPSPPAAPRPQSRG. The span at 10–22 shows a compositional bias: pro residues; sequence QVPPQQDPQVPHP. Residues 23 to 33 are compositionally biased toward basic and acidic residues; it reads QEPREEPHEEP. A Polymerase core binding motif is present at residues 101–114; that stretch reads DVVQVGTIGLINAI. Residues 264–283 constitute a DNA-binding region (H-T-H motif); the sequence is QSQISAELGVSQMHVSRLLA.

Belongs to the sigma-70 factor family. SigB subfamily.

Its function is as follows. Sigma factors are initiation factors that promote the attachment of RNA polymerase to specific initiation sites and are then released. This sigma factor is required for normal spore maturation. This is RNA polymerase sigma-F factor (sigF) from Kitasatospora aureofaciens (Streptomyces aureofaciens).